A 229-amino-acid polypeptide reads, in one-letter code: MLYAFTLGRKLRGEEPSYPEKGGKGGADKSAKYAAEAQKYAADLQNQQFNTIMNNLKPFTPLADKYIGSLEGLSSLEGQGQALNNYYNSQQYQDLAGQARYQNLAAAEATGGLGSTATSNQLSAIAPTLGQQWLSGQMNNYQNLANIGLGALQGQANAGQTYANNMSQISQQSAALAAANANRPSAMQSAIGGGASGAIAGAGLAKLIGSSTPWGAAIGGGIGLLGSLF.

A propeptide spans 1 to 20 (MLYAFTLGRKLRGEEPSYPE) (removed in mature form).

Belongs to the podoviruses gp7 family. Interacts with the internal virion protein gp20; this interaction forms a tube-like structure that may allow DNA ejection through the host membranes.

Its subcellular location is the virion. Its function is as follows. Inner capsid protein that plays a role in viral DNA ejection into the host cell. Assembles into an extracellular trans-envelope channel completed by the internal virion proteins gp7 and probably gp16. This channel allows the delivery of the viral genome into the cell cytoplasm. Displays membrane-association properties, may therefore form a simple channel spanning the outer membrane. This chain is Internal virion protein gp7 (7), found in Salmonella phage P22 (Bacteriophage P22).